The following is a 445-amino-acid chain: N-succinylarginine dihydrolase (445 aa).

Substrate contacts are provided by residues 19–28 (AGLSFGNVAS), Asn-110, and 137–138 (HR). The active site involves Glu-174. Residue Arg-214 participates in substrate binding. The active site involves His-250. Asp-252 and Asn-363 together coordinate substrate. The active-site Nucleophile is Cys-369.

The protein belongs to the succinylarginine dihydrolase family. Homodimer.

It catalyses the reaction N(2)-succinyl-L-arginine + 2 H2O + 2 H(+) = N(2)-succinyl-L-ornithine + 2 NH4(+) + CO2. It participates in amino-acid degradation; L-arginine degradation via AST pathway; L-glutamate and succinate from L-arginine: step 2/5. Its function is as follows. Catalyzes the hydrolysis of N(2)-succinylarginine into N(2)-succinylornithine, ammonia and CO(2). In Shewanella woodyi (strain ATCC 51908 / MS32), this protein is N-succinylarginine dihydrolase.